The sequence spans 489 residues: Glycogen synthase (489 aa).

Position 17 (Lys-17) interacts with ADP-alpha-D-glucose.

Belongs to the glycosyltransferase 1 family. Bacterial/plant glycogen synthase subfamily.

It carries out the reaction [(1-&gt;4)-alpha-D-glucosyl](n) + ADP-alpha-D-glucose = [(1-&gt;4)-alpha-D-glucosyl](n+1) + ADP + H(+). The protein operates within glycan biosynthesis; glycogen biosynthesis. Synthesizes alpha-1,4-glucan chains using ADP-glucose. In Nitratidesulfovibrio vulgaris (strain ATCC 29579 / DSM 644 / CCUG 34227 / NCIMB 8303 / VKM B-1760 / Hildenborough) (Desulfovibrio vulgaris), this protein is Glycogen synthase.